The sequence spans 199 residues: Holliday junction branch migration complex subunit RuvA (199 aa).

The domain I stretch occupies residues 1–64 (MIAKLTGRLD…EDFLRLLGFA (64 aa)). The segment at 65 to 143 (RAEERDWFRL…ALGGISGSGP (79 aa)) is domain II. Positions 144 to 146 (ALS) are flexible linker. A domain III region spans residues 147–199 (AAAGPVGDAIAALTGLGFKPGEASAAVAAANEELGADASLDALVRVALKKAAK).

The protein belongs to the RuvA family. In terms of assembly, homotetramer. Forms an RuvA(8)-RuvB(12)-Holliday junction (HJ) complex. HJ DNA is sandwiched between 2 RuvA tetramers; dsDNA enters through RuvA and exits via RuvB. An RuvB hexamer assembles on each DNA strand where it exits the tetramer. Each RuvB hexamer is contacted by two RuvA subunits (via domain III) on 2 adjacent RuvB subunits; this complex drives branch migration. In the full resolvosome a probable DNA-RuvA(4)-RuvB(12)-RuvC(2) complex forms which resolves the HJ.

The protein resides in the cytoplasm. Its function is as follows. The RuvA-RuvB-RuvC complex processes Holliday junction (HJ) DNA during genetic recombination and DNA repair, while the RuvA-RuvB complex plays an important role in the rescue of blocked DNA replication forks via replication fork reversal (RFR). RuvA specifically binds to HJ cruciform DNA, conferring on it an open structure. The RuvB hexamer acts as an ATP-dependent pump, pulling dsDNA into and through the RuvAB complex. HJ branch migration allows RuvC to scan DNA until it finds its consensus sequence, where it cleaves and resolves the cruciform DNA. The chain is Holliday junction branch migration complex subunit RuvA from Sphingopyxis alaskensis (strain DSM 13593 / LMG 18877 / RB2256) (Sphingomonas alaskensis).